Reading from the N-terminus, the 316-residue chain is Transaldolase (316 aa).

The active-site Schiff-base intermediate with substrate is K127.

It belongs to the transaldolase family. Type 2 subfamily.

Its subcellular location is the cytoplasm. It catalyses the reaction D-sedoheptulose 7-phosphate + D-glyceraldehyde 3-phosphate = D-erythrose 4-phosphate + beta-D-fructose 6-phosphate. The protein operates within carbohydrate degradation; pentose phosphate pathway; D-glyceraldehyde 3-phosphate and beta-D-fructose 6-phosphate from D-ribose 5-phosphate and D-xylulose 5-phosphate (non-oxidative stage): step 2/3. Its function is as follows. Transaldolase is important for the balance of metabolites in the pentose-phosphate pathway. This is Transaldolase from Helicobacter pylori (strain Shi470).